The following is a 247-amino-acid chain: 2,3-bisphosphoglycerate-dependent phosphoglycerate mutase (247 aa).

Residues R8 to N15, T21 to G22, R60, E87 to Y90, K98, R114 to R115, and G183 to N184 contribute to the substrate site. The active-site Tele-phosphohistidine intermediate is the H9. The Proton donor/acceptor role is filled by E87.

This sequence belongs to the phosphoglycerate mutase family. BPG-dependent PGAM subfamily. In terms of assembly, homodimer.

It catalyses the reaction (2R)-2-phosphoglycerate = (2R)-3-phosphoglycerate. Its pathway is carbohydrate degradation; glycolysis; pyruvate from D-glyceraldehyde 3-phosphate: step 3/5. Functionally, catalyzes the interconversion of 2-phosphoglycerate and 3-phosphoglycerate. This Leptothrix cholodnii (strain ATCC 51168 / LMG 8142 / SP-6) (Leptothrix discophora (strain SP-6)) protein is 2,3-bisphosphoglycerate-dependent phosphoglycerate mutase.